Consider the following 230-residue polypeptide: Magnesium-protoporphyrin O-methyltransferase (230 aa).

It belongs to the class I-like SAM-binding methyltransferase superfamily. Magnesium protoporphyrin O-methyltransferase family.

The catalysed reaction is Mg-protoporphyrin IX + S-adenosyl-L-methionine = Mg-protoporphyrin IX 13-monomethyl ester + S-adenosyl-L-homocysteine. The protein operates within porphyrin-containing compound metabolism; chlorophyll biosynthesis (light-independent). Functionally, converts Mg-protoporphyrin IX to Mg-protoporphyrin IX methylester using S-adenosyl-L-methionine as a cofactor. The chain is Magnesium-protoporphyrin O-methyltransferase (chlM) from Synechocystis sp. (strain ATCC 27184 / PCC 6803 / Kazusa).